A 102-amino-acid chain; its full sequence is Small ribosomal subunit protein uS10 (102 aa).

This sequence belongs to the universal ribosomal protein uS10 family. In terms of assembly, part of the 30S ribosomal subunit.

Its function is as follows. Involved in the binding of tRNA to the ribosomes. The sequence is that of Small ribosomal subunit protein uS10 from Trichlorobacter lovleyi (strain ATCC BAA-1151 / DSM 17278 / SZ) (Geobacter lovleyi).